A 148-amino-acid chain; its full sequence is Large ribosomal subunit protein bL9 (148 aa).

This sequence belongs to the bacterial ribosomal protein bL9 family.

In terms of biological role, binds to the 23S rRNA. The sequence is that of Large ribosomal subunit protein bL9 from Listeria innocua serovar 6a (strain ATCC BAA-680 / CLIP 11262).